The sequence spans 1481 residues: Cystic fibrosis transmembrane conductance regulator (1481 aa).

The Cytoplasmic portion of the chain corresponds to Met1–Phe77. A helical transmembrane segment spans residues Phe78–Gln98. Residues Phe81 to Leu365 enclose the ABC transmembrane type-1 1 domain. Topologically, residues Pro99–Tyr122 are extracellular. The helical transmembrane segment at Leu123–His146 threads the bilayer. Residues His147–Leu195 lie on the Cytoplasmic side of the membrane. The chain crosses the membrane as a helical span at residues Ala196–Trp216. Over Glu217–Ser222 the chain is Extracellular. A helical transmembrane segment spans residues Ala223 to Met243. Residues Met244–Lys298 lie on the Cytoplasmic side of the membrane. The chain crosses the membrane as a helical span at residues Ala299–Phe319. At Leu320–Thr339 the chain is on the extracellular side. Residues Ile340 to Val358 form a helical membrane-spanning segment. The Cytoplasmic segment spans residues Gln359–Ser858. Residues Trp401, Ser434, Gly458–Thr465, and Gln493 each bind ATP. Residues Asn423 to Gly646 enclose the ABC transporter 1 domain. Cys524 carries the S-palmitoyl cysteine lipid modification. Phosphoserine is present on residues Ser549 and Ser660. Residues Ser654 to Glu831 are disordered R region. The residue at position 670 (Ser670) is a Phosphoserine; by PKA. Residue Ser686 is modified to Phosphoserine. Residue Lys688 forms a Glycyl lysine isopeptide (Lys-Gly) (interchain with G-Cter in ubiquitin) linkage. Phosphoserine is present on residues Ser700 and Ser712. Thr717 carries the phosphothreonine modification. Phosphoserine is present on residues Ser737, Ser768, Ser790, Ser795, and Ser813. Residues Leu859 to Val879 traverse the membrane as a helical segment. One can recognise an ABC transmembrane type-1 2 domain in the interval Leu859–Ser1155. The Extracellular segment spans residues Val880–Ile918. N-linked (GlcNAc...) asparagine glycans are attached at residues Asn894, Asn900, and Asn909. Residues Tyr919–His939 form a discontinuously helical membrane-spanning segment. The Cytoplasmic portion of the chain corresponds to Thr940 to Thr990. A helical membrane pass occupies residues Ile991 to Leu1011. Topologically, residues Gln1012 to Pro1013 are extracellular. Residues Tyr1014 to Leu1034 traverse the membrane as a helical segment. At His1035 to Thr1095 the chain is on the cytoplasmic side. A helical transmembrane segment spans residues Leu1096–Phe1116. The Extracellular portion of the chain corresponds to Ile1117 to Gly1130. A helical membrane pass occupies residues Ile1131–Ile1151. The Cytoplasmic portion of the chain corresponds to Asp1152–Leu1481. The ABC transporter 2 domain occupies Val1199–Ser1444. Residues Tyr1220 and Gly1245–Ser1252 each bind ATP. Residues Arg1387–Leu1481 are interaction with GORASP2. The S-palmitoyl cysteine moiety is linked to residue Cys1396. A phosphoserine mark is found at Ser1445 and Ser1457. Residues Lys1449–Leu1481 are disordered. The segment covering Leu1450–Arg1462 has biased composition (basic residues). Residues Glu1471–Leu1481 show a composition bias toward acidic residues. The PDZ-binding signature appears at Thr1479 to Leu1481.

It belongs to the ABC transporter superfamily. ABCC family. CFTR transporter (TC 3.A.1.202) subfamily. In terms of assembly, monomer; does not require oligomerization for channel activity. May form oligomers in the membrane. Interacts with SLC26A3, SLC26A6 and NHERF1. Interacts with SHANK2. Interacts with MYO6. Interacts (via C-terminus) with GOPC (via PDZ domain); this promotes CFTR internalization and thereby decreases channel activity. Interacts with SLC4A7 through NHERF1. Found in a complex with MYO5B and RAB11A. Interacts with ANO1. Interacts with SLC26A8. Interacts with AHCYL1; the interaction increases CFTR activity. Interacts with CSE1L. The core-glycosylated form interacts with GORASP2 (via PDZ GRASP-type 1 domain) in respone to ER stress. Interacts with MARCHF2; the interaction leads to CFTR ubiqtuitination and degradation. Interacts with ADGRG2. N-glycosylated. Post-translationally, phosphorylated; cAMP treatment promotes phosphorylation and activates the channel. Dephosphorylation decreases the ATPase activity (in vitro). Phosphorylation at PKA sites activates the channel. Phosphorylation at PKC sites enhances the response to phosphorylation by PKA. Phosphorylated by AMPK; this inhibits channel activity. In terms of processing, ubiquitinated, leading to its degradation in the lysosome. Deubiquitination by USP10 in early endosomes enhances its endocytic recycling to the cell membrane. Ubiquitinated by RNF185 during ER stress. Ubiquitinated by MARCHF2. In terms of tissue distribution, isoform 1 is expressed in the pancreas. Isoform 2 is specifically expressed in the ventricle.

Its subcellular location is the apical cell membrane. The protein resides in the early endosome membrane. It localises to the cell membrane. The protein localises to the recycling endosome membrane. It is found in the endoplasmic reticulum membrane. Its subcellular location is the nucleus. It carries out the reaction ATP + H2O + closed Cl(-) channel = ADP + phosphate + open Cl(-) channel.. It catalyses the reaction chloride(in) = chloride(out). The enzyme catalyses hydrogencarbonate(in) = hydrogencarbonate(out). The catalysed reaction is ATP + H2O = ADP + phosphate + H(+). In terms of biological role, epithelial ion channel that plays an important role in the regulation of epithelial ion and water transport and fluid homeostasis. Mediates the transport of chloride ions across the cell membrane. Possesses an intrinsic ATPase activity and utilizes ATP to gate its channel; the passive flow of anions through the channel is gated by cycles of ATP binding and hydrolysis by the ATP-binding domains. The ion channel is also permeable to HCO(3)(-); selectivity depends on the extracellular chloride concentration. Exerts its function also by modulating the activity of other ion channels and transporters. Contributes to the regulation of the pH and the ion content of the epithelial fluid layer. Modulates the activity of the epithelial sodium channel (ENaC) complex, in part by regulating the cell surface expression of the ENaC complex. May regulate bicarbonate secretion and salvage in epithelial cells by regulating the transporter SLC4A7. Can inhibit the chloride channel activity of ANO1. Plays a role in the chloride and bicarbonate homeostasis during sperm epididymal maturation and capacitation. This chain is Cystic fibrosis transmembrane conductance regulator, found in Oryctolagus cuniculus (Rabbit).